A 421-amino-acid polypeptide reads, in one-letter code: Testin (421 aa).

One can recognise a PET domain in the interval 92–199 (MILTNPVAAK…GDVKLPREMD (108 aa)). The segment at 133-164 (EKQPVAGSEGAQYRKKQLAKQLPAHDQDPSKC) is disordered. The segment covering 155–164 (PAHDQDPSKC) has biased composition (basic and acidic residues). LIM zinc-binding domains lie at 234–297 (YSCY…CDSE), 299–359 (PRCA…NHAV), and 362–421 (QGCH…KMMS).

It belongs to the prickle / espinas / testin family. As to quaternary structure, interacts via LIM domain 1 with ZYX. Interacts (via LIM domain 3) with ENAH and VASP. Interacts with ALKBH4, talin, actin, alpha-actinin, GRIP1 and PXN. Interacts (via LIM domain 2) with ACTL7A (via N-terminus). Heterodimer with ACTL7A; the heterodimer interacts with ENAH to form a heterotrimer.

It is found in the cytoplasm. Its subcellular location is the cell junction. The protein localises to the focal adhesion. Functionally, scaffold protein that may play a role in cell adhesion, cell spreading and in the reorganization of the actin cytoskeleton. Plays a role in the regulation of cell proliferation. May act as a tumor suppressor. This chain is Testin (TES), found in Mustela putorius furo (European domestic ferret).